A 271-amino-acid polypeptide reads, in one-letter code: NADPH-dependent 7-cyano-7-deazaguanine reductase (271 aa).

79-81 (IES) serves as a coordination point for substrate. Residue 81-82 (SK) participates in NADPH binding. Cys178 functions as the Thioimide intermediate in the catalytic mechanism. Asp185 acts as the Proton donor in catalysis. 217–218 (HE) serves as a coordination point for substrate. Residue 246 to 247 (RG) coordinates NADPH.

This sequence belongs to the GTP cyclohydrolase I family. QueF type 2 subfamily. Homodimer.

The protein resides in the cytoplasm. The catalysed reaction is 7-aminomethyl-7-carbaguanine + 2 NADP(+) = 7-cyano-7-deazaguanine + 2 NADPH + 3 H(+). Its pathway is tRNA modification; tRNA-queuosine biosynthesis. Its function is as follows. Catalyzes the NADPH-dependent reduction of 7-cyano-7-deazaguanine (preQ0) to 7-aminomethyl-7-deazaguanine (preQ1). In Acinetobacter baylyi (strain ATCC 33305 / BD413 / ADP1), this protein is NADPH-dependent 7-cyano-7-deazaguanine reductase.